The primary structure comprises 254 residues: Small ribosomal subunit protein uS2 (254 aa).

The disordered stretch occupies residues 228 to 254 (DRGAEKEVEAAEEAPAAEAEAAPATEE). Residues 240–254 (EAPAAEAEAAPATEE) show a composition bias toward low complexity.

Belongs to the universal ribosomal protein uS2 family.

This is Small ribosomal subunit protein uS2 from Flavobacterium johnsoniae (strain ATCC 17061 / DSM 2064 / JCM 8514 / BCRC 14874 / CCUG 350202 / NBRC 14942 / NCIMB 11054 / UW101) (Cytophaga johnsonae).